The sequence spans 140 residues: MIDLENSTEFEIDTLNLENIANTLTTKDIELIVVKNDEIQELNKEYRNIDKPTDVLSFPMNFEVIDMPLLGSIVISTDFVQEKAKEFKHSFNEEFTLLFIHGLLHLLGFDHEIDNGEHRLKEEELIEKFKLPSSLIVRNS.

The Zn(2+) site is built by H101, H105, and H111.

It belongs to the endoribonuclease YbeY family. It depends on Zn(2+) as a cofactor.

It localises to the cytoplasm. Functionally, single strand-specific metallo-endoribonuclease involved in late-stage 70S ribosome quality control and in maturation of the 3' terminus of the 16S rRNA. The protein is Endoribonuclease YbeY of Aliarcobacter butzleri (strain RM4018) (Arcobacter butzleri).